We begin with the raw amino-acid sequence, 339 residues long: MSSKAPKKSKQRSQPRNRTPNTSVKTVAIPFAKTQIIKTVNPPPKPARGILHTQLVMSVVGSVQMRTNNGKSNQRFRLNPSNPALFPTLAYEAANYDMYRLKKLTLRYVPLVTVQNSGRVAMIWDPDSQDSAPQSRQEISAYSRSVSTAVYEKCSLTIPADNQWRFVADNTTVDRKLVDFGQLLFVTHSGSDGIETGDIFLDCEVEFKGPQPTASIVQKTVIDLGGTLTSFEGPSYLMPPDAFITSSSFGLFVDVAGTYLLTLVVTCSTTGSVTVGGNSTLVGDGRAAYGSSNYIASIVFTSSGVLSTTPSVQFSGSSGVSRVQMNICRCKQGNTFILG.

The span at 1–15 (MSSKAPKKSKQRSQP) shows a compositional bias: basic residues. Residues 1-24 (MSSKAPKKSKQRSQPRNRTPNTSV) form a disordered region. Residues 1-46 (MSSKAPKKSKQRSQPRNRTPNTSVKTVAIPFAKTQIIKTVNPPPKP) form a r domain, interaction with RNA region. Residues 47 to 207 (ARGILHTQLV…DIFLDCEVEF (161 aa)) form a s domain, virion shell region. Positions 208–339 (KGPQPTASIV…CKQGNTFILG (132 aa)) are p domain, projecting.

The protein belongs to the icosahedral plant coat protein family. Homomultimer.

Its subcellular location is the virion. Functionally, capsid protein self-assembles to form an icosahedral capsid with a T=3 symmetry, about 31-34 nm in diameter, and consisting of 180 capsid proteins. Plays an essential role in virion formation by interacting, via its N-terminal region, with the bipartite viral RNA genome and specifically with the 3' terminus of RNA-1 and the TA element on RNA-2. Also participates in symptom development, viral RNA accumulation and systemic movement within the host. The polypeptide is Capsid protein (Medicago sativa (Alfalfa)).